A 1187-amino-acid chain; its full sequence is Roquin-2 (1187 aa).

7 residues coordinate Zn(2+): Cys-14, Cys-17, Cys-33, His-35, Cys-38, Cys-50, and Asp-53. The RING-type; degenerate zinc-finger motif lies at 14–54; it reads CPICYNEFDENVHKPISLGCSHTVCKTCLNKLHRKACPFDQ. Positions 91-170 are HEPN-N; that stretch reads ENKHYEVAKK…RTVTELILQH (80 aa). Residues 171 to 325 are ROQ; that stretch reads QNPQQLSANL…SIIDKLQSPE (155 aa). The HEPN-C stretch occupies residues 326 to 396; that stretch reads SFAKSVQELT…GLVDFIQNYS (71 aa). The segment at 410 to 438 adopts a C3H1-type zinc-finger fold; that stretch reads KYKTSMCRDLRQQGGCPRGTNCTFAHSQE. Disordered stretches follow at residues 527-571 and 640-677; these read VGTN…GTEL and NVPE…PPPQ. The span at 529-545 shows a compositional bias: polar residues; sequence TNAQNAGPSAESVSENK. Phosphoserine is present on Ser-548. The segment covering 553 to 571 has biased composition (polar residues); it reads PVSNAAATSAGPSNFGTEL. Residues Ser-806, Ser-981, and Ser-1115 each carry the phosphoserine modification.

In terms of assembly, interacts with EDC4. Interacts with CCR4-NOT deadenylase complex. Interacts with MAP3K5; the interaction is probably stimulus-dependent. In terms of processing, proteolytically cleaved by MALT1 in activated CD4(+) T cells; cleavage at Arg-509 is critical for promoting RC3H1 degradation in response to T-cell receptor (TCR) stimulation, and hence is necessary for prolonging the stability of a set of mRNAs controlling Th17 cell differentiation. As to expression, highest levels in lymph node and thymus and slightly lesser amounts in brain, lung, and spleen (at protein level). Very weak expression in heart, muscle, and kidney (at protein level). Expressed in CD4(+) helper T-cells (at protein level).

Its subcellular location is the cytoplasm. The protein localises to the P-body. It catalyses the reaction S-ubiquitinyl-[E2 ubiquitin-conjugating enzyme]-L-cysteine + [acceptor protein]-L-lysine = [E2 ubiquitin-conjugating enzyme]-L-cysteine + N(6)-ubiquitinyl-[acceptor protein]-L-lysine.. It participates in protein modification; protein ubiquitination. With respect to regulation, binding to dsRNA, but not CDE RNA, crosstalks with the E3 ubiquitin ligase activity and may inhibit ubiquitination. Functionally, post-transcriptional repressor of mRNAs containing a conserved stem loop motif, called constitutive decay element (CDE), which is often located in the 3'-UTR, as in HMGXB3, ICOS, IER3, NFKBID, NFKBIZ, PPP1R10, TNF and in many more mRNAs. Binds to CDE and promotes mRNA deadenylation and degradation. This process does not involve miRNAs. In follicular helper T (Tfh) cells, represses of ICOS and TNFRSF4 expression, thus preventing spontaneous Tfh cell differentiation, germinal center B-cell differentiation in the absence of immunization and autoimmunity. In resting or LPS-stimulated macrophages, controls inflammation by suppressing TNF expression. Also recognizes CDE in its own mRNA and in that of paralogous RC3H1, possibly leading to feedback loop regulation. Inhibits cooperatively with ZC3H12A the differentiation of helper T cells Th17 in lungs. They repress target mRNA encoding the Th17 cell-promoting factors IL6, ICOS, REL, IRF4, NFKBID and NFKBIZ. The cooperation requires RNA-binding by RC3H1 and the nuclease activity of ZC3H12A. miRNA-binding protein that regulates microRNA homeostasis. Enhances DICER-mediated processing of pre-MIR146a but reduces mature MIR146a levels through an increase of 3' end uridylation. Both inhibits ICOS mRNA expression and they may act together to exert the suppression. Acts as a ubiquitin E3 ligase. Pairs with E2 enzymes UBE2B, UBE2D2, UBE2E2, UBE2E3, UBE2G2, UBE2K and UBE2Q2 and produces polyubiquitin chains. Shows the strongest activity when paired with UBE2N:UBE2V1 or UBE2N:UBE2V2 E2 complexes and generate both short and long polyubiquitin chains. Involved in the ubiquitination of MAP3K5. Able to interact with double-stranded RNA (dsRNA). This Mus musculus (Mouse) protein is Roquin-2 (Rc3h2).